We begin with the raw amino-acid sequence, 257 residues long: E3 ubiquitin-protein ligase RNF170 (257 aa).

The Lumenal portion of the chain corresponds to 1 to 24; that stretch reads MADNQEERPHFPLDEGSIIEGVSD. The chain crosses the membrane as a helical span at residues 25 to 45; sequence QVIVVVLLSFVAVGSLIYLLL. Residues 46-200 are Cytoplasmic-facing; it reads RNDEQNIHPE…GGLFWMFRIR (155 aa). The RING-type zinc finger occupies 87–130; the sequence is CPVCLQQATFPVETNCGHLFCGSCIIAYWRYGTWLGAINCPICR. Residues 201 to 221 form a helical membrane-spanning segment; sequence IVLCLLGALLYLVSPLDIIPE. Residue A222 is a topological domain, lumenal. A helical transmembrane segment spans residues 223-243; the sequence is LFGILGFLDDLFVLFLLLIYI. Residues 244-257 are Cytoplasmic-facing; sequence SIMYREVVTQRLYR.

The protein resides in the endoplasmic reticulum membrane. It catalyses the reaction S-ubiquitinyl-[E2 ubiquitin-conjugating enzyme]-L-cysteine + [acceptor protein]-L-lysine = [E2 ubiquitin-conjugating enzyme]-L-cysteine + N(6)-ubiquitinyl-[acceptor protein]-L-lysine.. It functions in the pathway protein modification; protein ubiquitination. Functionally, E3 ubiquitin-protein ligase that plays an essential role in stimulus-induced inositol 1,4,5-trisphosphate receptor (ITPR) ubiquitination and degradation via the endoplasmic reticulum-associated degradation (ERAD) pathway. Also involved in ITPR turnover in resting cells. The sequence is that of E3 ubiquitin-protein ligase RNF170 (rnf170) from Xenopus laevis (African clawed frog).